A 478-amino-acid polypeptide reads, in one-letter code: Divinyl ether synthase CYP74D1 (478 aa).

Cys-431 contributes to the heme binding site.

This sequence belongs to the cytochrome P450 family. 9-divinyl ether synthase subfamily. Expressed in roots. Detected in stems, but not in flower buds, petioles, cotyledons or leaves.

It catalyses the reaction (9S)-hydroperoxy-(10E,12Z)-octadecadienoate = colneleate + H2O. The enzyme catalyses (9S)-hydroperoxy-(10E,12Z,15Z)-octadecatrienoate = colnelenate + H2O. Functionally, involved in the biosynthesis of the anti-fungal toxins colneleate and colnelenate. Can use (9S)-hydroperoxy-(10E,12Z)-octadecadienoate (9-HPOD) and (9S)-hydroperoxy-(10E,12Z,15Z)-octadecatrienoate (9-HPOT) as substrates, but has a very low activity with the corresponding 13-hydroperoxides (13-HPOD and 13-POT). This chain is Divinyl ether synthase CYP74D1, found in Solanum lycopersicum (Tomato).